The chain runs to 122 residues: Large ribosomal subunit protein uL18 (122 aa).

Basic residues predominate over residues 1–19; the sequence is MSTLSRKQKTQKRHKRLRR. The disordered stretch occupies residues 1 to 26; the sequence is MSTLSRKQKTQKRHKRLRRNLSGTDQ.

This sequence belongs to the universal ribosomal protein uL18 family. Part of the 50S ribosomal subunit; part of the 5S rRNA/L5/L18/L25 subcomplex. Contacts the 5S and 23S rRNAs.

In terms of biological role, this is one of the proteins that bind and probably mediate the attachment of the 5S RNA into the large ribosomal subunit, where it forms part of the central protuberance. This Prochlorococcus marinus (strain SARG / CCMP1375 / SS120) protein is Large ribosomal subunit protein uL18.